A 406-amino-acid chain; its full sequence is Probable UDP-arabinose 4-epimerase 3 (406 aa).

Over 1-26 (MIPLNRRASQTRGGMEYFDARRKPHN) the chain is Cytoplasmic. A helical; Signal-anchor for type II membrane protein membrane pass occupies residues 27–44 (VGKVIAALVLTTLCIFIL). At 45-406 (KQSPGFGGSS…KSHPRGYGSN (362 aa)) the chain is on the lumenal side. 65–96 (HVLVTGGAGYIGSHASLRLLKDNYRVTIVDNL) is an NAD(+) binding site. Residue tyrosine 213 is the Proton acceptor of the active site.

The protein belongs to the NAD(P)-dependent epimerase/dehydratase family. It depends on NAD(+) as a cofactor.

Its subcellular location is the golgi apparatus. It localises to the golgi stack membrane. It catalyses the reaction UDP-beta-L-arabinopyranose = UDP-alpha-D-xylose. The protein operates within nucleotide-sugar biosynthesis; UDP-L-arabinose biosynthesis; UDP-L-arabinose from UDP-alpha-D-xylose: step 1/1. Its pathway is cell wall biogenesis; cell wall polysaccharide biosynthesis. The protein is Probable UDP-arabinose 4-epimerase 3 (UEL-3) of Oryza sativa subsp. japonica (Rice).